We begin with the raw amino-acid sequence, 295 residues long: Bifunctional protein FolD (295 aa).

Residues 163 to 165, serine 188, and isoleucine 229 contribute to the NADP(+) site; that span reads GRS.

Belongs to the tetrahydrofolate dehydrogenase/cyclohydrolase family. As to quaternary structure, homodimer.

The catalysed reaction is (6R)-5,10-methylene-5,6,7,8-tetrahydrofolate + NADP(+) = (6R)-5,10-methenyltetrahydrofolate + NADPH. It catalyses the reaction (6R)-5,10-methenyltetrahydrofolate + H2O = (6R)-10-formyltetrahydrofolate + H(+). It functions in the pathway one-carbon metabolism; tetrahydrofolate interconversion. Catalyzes the oxidation of 5,10-methylenetetrahydrofolate to 5,10-methenyltetrahydrofolate and then the hydrolysis of 5,10-methenyltetrahydrofolate to 10-formyltetrahydrofolate. This is Bifunctional protein FolD from Hyphomonas neptunium (strain ATCC 15444).